The chain runs to 242 residues: C-reactive protein 3.3 (242 aa).

Positions 1 to 24 (MKTFHGPTCGTAVSLCLLLFLTSA) are cleaved as a signal peptide. The 212-residue stretch at 30–241 (ITSKVKFPPS…GVVLSPNEIC (212 aa)) folds into the Pentraxin (PTX) domain. Phosphocholine contacts are provided by T60 and Y63. Intrachain disulfides connect C62–C125 and C112–C144. D85 and N86 together coordinate Ca(2+). N147 carries an N-linked (GlcNAc...) asparagine glycan. Ca(2+)-binding residues include Q169, D170, and Q180. A disulfide bridge links C207 with C241.

It belongs to the pentraxin family. Homopentamer. Pentraxin (or pentaxin) have a discoid arrangement of 5 non-covalently bound subunits. It depends on Ca(2+) as a cofactor.

It localises to the secreted. Might serve the role of immunoglobulins. The sequence is that of C-reactive protein 3.3 from Limulus polyphemus (Atlantic horseshoe crab).